Reading from the N-terminus, the 376-residue chain is Queuine tRNA-ribosyltransferase (376 aa).

The active-site Proton acceptor is Asp-93. Residues 93–97 (DSGGF), Asp-147, Gln-190, and Gly-217 contribute to the substrate site. The segment at 248 to 254 (GVGKPGD) is RNA binding. Asp-267 acts as the Nucleophile in catalysis. 4 residues coordinate Zn(2+): Cys-305, Cys-307, Cys-310, and His-336.

The protein belongs to the queuine tRNA-ribosyltransferase family. As to quaternary structure, homodimer. Within each dimer, one monomer is responsible for RNA recognition and catalysis, while the other monomer binds to the replacement base PreQ1. The cofactor is Zn(2+).

The enzyme catalyses 7-aminomethyl-7-carbaguanine + guanosine(34) in tRNA = 7-aminomethyl-7-carbaguanosine(34) in tRNA + guanine. It participates in tRNA modification; tRNA-queuosine biosynthesis. Catalyzes the base-exchange of a guanine (G) residue with the queuine precursor 7-aminomethyl-7-deazaguanine (PreQ1) at position 34 (anticodon wobble position) in tRNAs with GU(N) anticodons (tRNA-Asp, -Asn, -His and -Tyr). Catalysis occurs through a double-displacement mechanism. The nucleophile active site attacks the C1' of nucleotide 34 to detach the guanine base from the RNA, forming a covalent enzyme-RNA intermediate. The proton acceptor active site deprotonates the incoming PreQ1, allowing a nucleophilic attack on the C1' of the ribose to form the product. After dissociation, two additional enzymatic reactions on the tRNA convert PreQ1 to queuine (Q), resulting in the hypermodified nucleoside queuosine (7-(((4,5-cis-dihydroxy-2-cyclopenten-1-yl)amino)methyl)-7-deazaguanosine). This Dinoroseobacter shibae (strain DSM 16493 / NCIMB 14021 / DFL 12) protein is Queuine tRNA-ribosyltransferase.